The chain runs to 120 residues: Ribonuclease P protein component 2 (120 aa).

The protein belongs to the eukaryotic/archaeal RNase P protein component 2 family. Consists of a catalytic RNA component and at least 4-5 protein subunits.

The protein resides in the cytoplasm. The catalysed reaction is Endonucleolytic cleavage of RNA, removing 5'-extranucleotides from tRNA precursor.. Part of ribonuclease P, a protein complex that generates mature tRNA molecules by cleaving their 5'-ends. The chain is Ribonuclease P protein component 2 from Thermococcus kodakarensis (strain ATCC BAA-918 / JCM 12380 / KOD1) (Pyrococcus kodakaraensis (strain KOD1)).